The sequence spans 494 residues: Flagellin A (494 aa).

Belongs to the bacterial flagellin family. As to quaternary structure, heteromer of FlaA and FlaB. FlaB is located proximal to the hook while the remainder of the filament is composed of the predominant FlaA.

Its subcellular location is the secreted. It localises to the bacterial flagellum. Its function is as follows. Flagellin is the subunit protein which polymerizes to form the filaments of bacterial flagella. Important for motility and virulence. The chain is Flagellin A (flaA) from Helicobacter mustelae.